We begin with the raw amino-acid sequence, 382 residues long: Na(+)/H(+) antiporter NhaA (382 aa).

Transmembrane regions (helical) follow at residues 11–31 (FSVP…LDPA), 47–67 (FHFV…AVEI), 88–108 (LATL…NAII), 116–136 (GWGI…RLVF), 145–165 (FLLL…AVFY), 170–190 (HPTE…AYIL), 261–283 (IVVD…SSVG), 299–319 (LGIF…PQQV), 327–347 (TGLV…VAFV), and 353–373 (GSAK…IMLG).

It belongs to the NhaA Na(+)/H(+) (TC 2.A.33) antiporter family.

The protein resides in the cell inner membrane. The enzyme catalyses Na(+)(in) + 2 H(+)(out) = Na(+)(out) + 2 H(+)(in). In terms of biological role, na(+)/H(+) antiporter that extrudes sodium in exchange for external protons. The sequence is that of Na(+)/H(+) antiporter NhaA from Geobacter sulfurreducens (strain ATCC 51573 / DSM 12127 / PCA).